A 510-amino-acid polypeptide reads, in one-letter code: Glutamyl-tRNA(Gln) amidotransferase subunit A (510 aa).

Residues lysine 82 and serine 157 each act as charge relay system in the active site. Serine 181 (acyl-ester intermediate) is an active-site residue.

The protein belongs to the amidase family. GatA subfamily. As to quaternary structure, heterotrimer of A, B and C subunits.

It carries out the reaction L-glutamyl-tRNA(Gln) + L-glutamine + ATP + H2O = L-glutaminyl-tRNA(Gln) + L-glutamate + ADP + phosphate + H(+). Its function is as follows. Allows the formation of correctly charged Gln-tRNA(Gln) through the transamidation of misacylated Glu-tRNA(Gln) in organisms which lack glutaminyl-tRNA synthetase. The reaction takes place in the presence of glutamine and ATP through an activated gamma-phospho-Glu-tRNA(Gln). The protein is Glutamyl-tRNA(Gln) amidotransferase subunit A of Bordetella avium (strain 197N).